We begin with the raw amino-acid sequence, 118 residues long: Probable non-functional immunoglobulin lambda variable 2-33 (118 aa).

The first 19 residues, 1–19, serve as a signal peptide directing secretion; the sequence is MAWALLLLTLLTQGTGSWA. Residues 20-44 form a framework-1 region; sequence QSALTQPPFVSGAPGQSVTISCTGT. In terms of domain architecture, Ig-like spans 34–118; it reads GQSVTISCTG…CSLYSSSYTF (85 aa). A disulfide bond links cysteine 41 and cysteine 109. A complementarity-determining-1 region spans residues 45 to 53; it reads SSDVGDYDH. A framework-2 region spans residues 54–70; that stretch reads VFWYQKRLSTTSRLLIY. Residues 71 to 73 form a complementarity-determining-2 region; the sequence is NVN. The segment at 74 to 109 is framework-3; that stretch reads TRPSGISDLFSGSKSGNMASLTISGLKSEVEANYHC. The complementarity-determining-3 stretch occupies residues 110-118; the sequence is SLYSSSYTF.

In terms of assembly, immunoglobulins are composed of two identical heavy chains and two identical light chains; disulfide-linked.

The protein localises to the secreted. It is found in the cell membrane. Its function is as follows. Probable non-functional open reading frame (ORF) of V region of the variable domain of immunoglobulin light chains. Non-functional ORF generally cannot participate in the synthesis of a productive immunoglobulin chain due to altered V-(D)-J or switch recombination and/or splicing site (at mRNA level) and/or conserved amino acid change (protein level). Immunoglobulins, also known as antibodies, are membrane-bound or secreted glycoproteins produced by B lymphocytes. In the recognition phase of humoral immunity, the membrane-bound immunoglobulins serve as receptors which, upon binding of a specific antigen, trigger the clonal expansion and differentiation of B lymphocytes into immunoglobulins-secreting plasma cells. Secreted immunoglobulins mediate the effector phase of humoral immunity, which results in the elimination of bound antigens. The antigen binding site is formed by the variable domain of one heavy chain, together with that of its associated light chain. Thus, each immunoglobulin has two antigen binding sites with remarkable affinity for a particular antigen. The variable domains are assembled by a process called V-(D)-J rearrangement and can then be subjected to somatic hypermutations which, after exposure to antigen and selection, allow affinity maturation for a particular antigen. The polypeptide is Probable non-functional immunoglobulin lambda variable 2-33 (Homo sapiens (Human)).